A 219-amino-acid chain; its full sequence is Ribose-5-phosphate isomerase A (219 aa).

Residues 28-31 (SGST), 81-84 (DGAD), and 94-97 (KGGG) contribute to the substrate site. The Proton acceptor role is filled by E103. K121 contacts substrate.

The protein belongs to the ribose 5-phosphate isomerase family. In terms of assembly, homodimer.

The catalysed reaction is aldehydo-D-ribose 5-phosphate = D-ribulose 5-phosphate. It functions in the pathway carbohydrate degradation; pentose phosphate pathway; D-ribose 5-phosphate from D-ribulose 5-phosphate (non-oxidative stage): step 1/1. Its function is as follows. Catalyzes the reversible conversion of ribose-5-phosphate to ribulose 5-phosphate. This Actinobacillus pleuropneumoniae serotype 5b (strain L20) protein is Ribose-5-phosphate isomerase A.